Here is a 347-residue protein sequence, read N- to C-terminus: Protein RecA (347 aa).

67-74 (GPESSGKT) provides a ligand contact to ATP.

Belongs to the RecA family. In terms of processing, the protein migrates as a 40 kDa protein in strains 69A and NCTC 11637. When overexpressed in E.coli a 38 kDa protein is made which is unable to complement the E.coli deletion mutant. It has been suggested this size difference is due to a post-translational modification.

It localises to the cytoplasm. Can catalyze the hydrolysis of ATP in the presence of single-stranded DNA, the ATP-dependent uptake of single-stranded DNA by duplex DNA, and the ATP-dependent hybridization of homologous single-stranded DNAs. It interacts with LexA causing its activation and leading to its autocatalytic cleavage. Its function is as follows. Deletion of this gene leads to the inability of the bacteria to perform homologous recombination, and markedly increases UV sensitivity. The chain is Protein RecA from Helicobacter pylori (strain ATCC 700392 / 26695) (Campylobacter pylori).